The primary structure comprises 241 residues: Aspartate/glutamate leucyltransferase (241 aa).

This sequence belongs to the R-transferase family. Bpt subfamily.

The protein localises to the cytoplasm. It carries out the reaction N-terminal L-glutamyl-[protein] + L-leucyl-tRNA(Leu) = N-terminal L-leucyl-L-glutamyl-[protein] + tRNA(Leu) + H(+). The enzyme catalyses N-terminal L-aspartyl-[protein] + L-leucyl-tRNA(Leu) = N-terminal L-leucyl-L-aspartyl-[protein] + tRNA(Leu) + H(+). Functionally, functions in the N-end rule pathway of protein degradation where it conjugates Leu from its aminoacyl-tRNA to the N-termini of proteins containing an N-terminal aspartate or glutamate. The chain is Aspartate/glutamate leucyltransferase from Parvibaculum lavamentivorans (strain DS-1 / DSM 13023 / NCIMB 13966).